Reading from the N-terminus, the 145-residue chain is Ribosome maturation factor RimP (145 aa).

This sequence belongs to the RimP family.

The protein resides in the cytoplasm. Functionally, required for maturation of 30S ribosomal subunits. The sequence is that of Ribosome maturation factor RimP from Borreliella burgdorferi (strain ZS7) (Borrelia burgdorferi).